A 179-amino-acid chain; its full sequence is Translation initiation factor IF-3 (179 aa).

This sequence belongs to the IF-3 family. Monomer.

It localises to the cytoplasm. Functionally, IF-3 binds to the 30S ribosomal subunit and shifts the equilibrium between 70S ribosomes and their 50S and 30S subunits in favor of the free subunits, thus enhancing the availability of 30S subunits on which protein synthesis initiation begins. In Buchnera aphidicola subsp. Acyrthosiphon pisum (strain 5A), this protein is Translation initiation factor IF-3.